The sequence spans 521 residues: Bifunctional purine biosynthesis protein PurH (521 aa).

Positions 1 to 145 (MIKQALISVS…KNHRDVTVVV (145 aa)) constitute an MGS-like domain.

Belongs to the PurH family.

It carries out the reaction (6R)-10-formyltetrahydrofolate + 5-amino-1-(5-phospho-beta-D-ribosyl)imidazole-4-carboxamide = 5-formamido-1-(5-phospho-D-ribosyl)imidazole-4-carboxamide + (6S)-5,6,7,8-tetrahydrofolate. It catalyses the reaction IMP + H2O = 5-formamido-1-(5-phospho-D-ribosyl)imidazole-4-carboxamide. It functions in the pathway purine metabolism; IMP biosynthesis via de novo pathway; 5-formamido-1-(5-phospho-D-ribosyl)imidazole-4-carboxamide from 5-amino-1-(5-phospho-D-ribosyl)imidazole-4-carboxamide (10-formyl THF route): step 1/1. Its pathway is purine metabolism; IMP biosynthesis via de novo pathway; IMP from 5-formamido-1-(5-phospho-D-ribosyl)imidazole-4-carboxamide: step 1/1. This chain is Bifunctional purine biosynthesis protein PurH, found in Burkholderia pseudomallei (strain 1106a).